A 473-amino-acid chain; its full sequence is Probable acid phosphatase DDB_G0284755 (473 aa).

His-94 acts as the Nucleophile in catalysis. Asp-359 serves as the catalytic Proton donor.

It belongs to the histidine acid phosphatase family.

It carries out the reaction a phosphate monoester + H2O = an alcohol + phosphate. In Dictyostelium discoideum (Social amoeba), this protein is Probable acid phosphatase DDB_G0284755.